The primary structure comprises 645 residues: Crossover junction endonuclease mus-81 (645 aa).

Disordered stretches follow at residues 98–119 and 219–310; these read LAAAGAVQDEQPPPPKRARTAR and GVAG…EDRK. The segment covering 223–252 has biased composition (polar residues); sequence SANTSRNAIASGSGTSNPNRSENVNPNRQD. The span at 296-305 shows a compositional bias: acidic residues; sequence DSDDEDPKYD. An ERCC4 domain is found at 353-459; it reads ELVLDTREVQ…NVVYIIENYN (107 aa).

It belongs to the XPF family. Interacts with eme-1. The cofactor is Mg(2+).

The protein localises to the nucleus. In terms of biological role, interacts with eme-1 to form a DNA structure-specific endonuclease with substrate preference for branched DNA structures with a 5'-end at the branch nick. Typical substrates include 3'-flap structures, D-loops, replication forks and nicked Holliday junctions. May be required in mitosis for the processing of stalled or collapsed replication fork intermediates. May be required in meiosis for the repair of meiosis-specific double strand breaks subsequent to single-end invasion (SEI). This is Crossover junction endonuclease mus-81 (mus-81) from Neurospora crassa (strain ATCC 24698 / 74-OR23-1A / CBS 708.71 / DSM 1257 / FGSC 987).